The sequence spans 394 residues: Phosphoglycerate kinase (394 aa).

Substrate is bound by residues Asp21–Asn23, Arg36, His59–Arg62, Arg118, and Arg151. Residue Ser183 is modified to Phosphoserine. Lys201 contacts ATP. Thr299 is modified (phosphothreonine). ATP contacts are provided by residues Glu323 and Gly350–Ser353.

It belongs to the phosphoglycerate kinase family. Monomer.

The protein resides in the cytoplasm. It carries out the reaction (2R)-3-phosphoglycerate + ATP = (2R)-3-phospho-glyceroyl phosphate + ADP. The protein operates within carbohydrate degradation; glycolysis; pyruvate from D-glyceraldehyde 3-phosphate: step 2/5. In Halalkalibacterium halodurans (strain ATCC BAA-125 / DSM 18197 / FERM 7344 / JCM 9153 / C-125) (Bacillus halodurans), this protein is Phosphoglycerate kinase.